The following is a 231-amino-acid chain: MLEDLKRQVLEANLALPKHNLVTLTWGNVSAVDRERGVLVIKPSGVDYSVMTADDMVVVSLESGEVVEGHKKPSSDTPTHRLLYQAFPTIGGIVHTHSRHATIWAQAGQPIPATGTTHADYFYGTIPCTRKMTEAEINGEYEWETGNVIVETFEKQGIDAAQMPGVLVHSHGPFAWGKNAEDAVHNAIVLEEVAYMGIFCRQLAPQLPDMQQSLLDKHYLRKHGAKAYYGQ.

Substrate-binding positions include 27 to 28, 44 to 45, and 74 to 75; these read GN, SG, and SS. Residues Asp76, His95, and His97 each contribute to the Zn(2+) site. The active-site Proton donor/acceptor is the Asp120. Residue His171 coordinates Zn(2+). Residue Tyr229 is the Proton donor/acceptor of the active site.

It belongs to the aldolase class II family. AraD/FucA subfamily. Homotetramer. The cofactor is Zn(2+).

The enzyme catalyses L-ribulose 5-phosphate = D-xylulose 5-phosphate. It functions in the pathway carbohydrate degradation; L-arabinose degradation via L-ribulose; D-xylulose 5-phosphate from L-arabinose (bacterial route): step 3/3. Involved in the degradation of L-arabinose. Catalyzes the interconversion of L-ribulose 5-phosphate (LRu5P) and D-xylulose 5-phosphate (D-Xu5P) via a retroaldol/aldol mechanism (carbon-carbon bond cleavage analogous to a class II aldolase reaction). The polypeptide is L-ribulose-5-phosphate 4-epimerase (Salmonella typhimurium (strain LT2 / SGSC1412 / ATCC 700720)).